The chain runs to 486 residues: Dipeptide and tripeptide permease B (486 aa).

The Cytoplasmic portion of the chain corresponds to 1-27; it reads MNKPVSIGLLQQPKPFFMIFFVELWER. A helical transmembrane segment spans residues 28–48; it reads FGYYGVQGVLTVYFVQKLGFS. Residues 49–52 are Periplasmic-facing; the sequence is QEQA. A helical transmembrane segment spans residues 53 to 73; that stretch reads FITFGAFAALVFGLISIGGYV. Topologically, residues 74–82 are cytoplasmic; it reads GDHLLGTKR. Residues 83-103 form a helical membrane-spanning segment; it reads TIVLGAIVLAIGYFMTGLSIL. At 104 to 106 the chain is on the periplasmic side; sequence HPN. A helical transmembrane segment spans residues 107 to 127; the sequence is LIFYALGTIAVGNGLFKANPA. The Cytoplasmic portion of the chain corresponds to 128–146; it reads SLLSKCYPPKDPRLDGAFT. Residues 147-167 form a helical membrane-spanning segment; that stretch reads LFYMSINLGSLFSLALAPVIA. Topologically, residues 168–172 are periplasmic; that stretch reads EKFSY. A helical membrane pass occupies residues 173–193; the sequence is AVTYNICGIGLIIALLVYIFC. Topologically, residues 194 to 211 are cytoplasmic; that stretch reads RNTVRNIGSEPDHQRINY. A helical transmembrane segment spans residues 212–232; sequence TNLFLVVAGSVVMVYVCAWLM. A topological domain (periplasmic) is located at residue His233. The chain crosses the membrane as a helical span at residues 234–254; the sequence is NVKIANIMLITLSVIVVFIFF. Topologically, residues 255 to 267 are cytoplasmic; the sequence is REALKQDKIGRNK. The helical transmembrane segment at 268-288 threads the bilayer; sequence MFVAFILMLQAIVFFILYAQM. Over 289–311 the chain is Periplasmic; it reads PTSLNFFAIHNVHHQLLGFNINP. Residues 312–332 traverse the membrane as a helical segment; it reads VSFQALNPFWIVVASPILAVL. Residues 333–348 are Cytoplasmic-facing; the sequence is YTHWGAKGKDLTMPAK. A helical transmembrane segment spans residues 349 to 369; the sequence is FAVGMFLCSLGFLTAAAAGLW. The Periplasmic portion of the chain corresponds to 370 to 375; it reads FADEQG. The chain crosses the membrane as a helical span at residues 376 to 396; sequence LTSAWFIVLVYLFQGVGELMI. Over 397-419 the chain is Cytoplasmic; the sequence is SALGLAMIAALVPQYLMGFILGM. Residues 420 to 440 traverse the membrane as a helical segment; sequence WYLTQATSSLLGGYVAALTAA. Residues 441–456 lie on the Periplasmic side of the membrane; that stretch reads PKGITDPLQTLPVYTS. The helical transmembrane segment at 457–477 threads the bilayer; that stretch reads VFGKIGIATFIVAIIMAATVP. Residues 478 to 486 lie on the Cytoplasmic side of the membrane; the sequence is LLNRMMQEK.

The protein belongs to the major facilitator superfamily. Proton-dependent oligopeptide transporter (POT/PTR) (TC 2.A.17) family. DtpB subfamily.

The protein resides in the cell inner membrane. Proton-dependent permease that transports di- and tripeptides. The protein is Dipeptide and tripeptide permease B of Photorhabdus luminescens (Xenorhabdus luminescens).